Here is a 423-residue protein sequence, read N- to C-terminus: G2/mitotic-specific cyclin-B1 (423 aa).

A Phosphoserine; by CDK1 modification is found at S116. A Phosphoserine modification is found at S118. Position 123 is a phosphoserine; by PLK1 (S123). S137 carries the post-translational modification Phosphoserine. Interaction with CDK2 regions lie at residues 159 to 167 (EYVKDIYAY) and 248 to 251 (YEEM). T311 bears the Phosphothreonine mark.

This sequence belongs to the cyclin family. Cyclin AB subfamily. Interacts with the CDC2 protein kinase to form a serine/threonine kinase holoenzyme complex also known as maturation promoting factor (MPF). The cyclin subunit imparts substrate specificity to the complex. Binds HEI10. Interacts with catalytically active RALBP1 and CDC2 during mitosis to form an endocytotic complex during interphase. Interacts with CCNF; interaction is required for nuclear localization. Interacts with CDK5RAP3. Interacts with RFPL4A and UBE2A. Interacts with INCA1. Post-translationally, ubiquitinated by the SCF(NIPA) complex during interphase, leading to its destruction. Deubiquitinated by USP22 during G2/M phase. Phosphorylated by PLK1 at Ser-123 on centrosomes during prophase: phosphorylation by PLK1 does not cause nuclear import. Phosphorylation at Ser-137 was also reported to be mediated by PLK1 but Ser-123 seems to be the primary phosphorylation site.

It localises to the cytoplasm. It is found in the nucleus. The protein resides in the cytoskeleton. The protein localises to the microtubule organizing center. Its subcellular location is the centrosome. In terms of biological role, essential for the control of the cell cycle at the G2/M (mitosis) transition. The sequence is that of G2/mitotic-specific cyclin-B1 (Ccnb1) from Rattus norvegicus (Rat).